The following is a 166-amino-acid chain: Interferon gamma (166 aa).

An N-terminal signal peptide occupies residues 1–23 (MKYTSSFLALLLCVLLGFSGSYG). Glutamine 24 is subject to Pyrrolidone carboxylic acid. Residues asparagine 39 and asparagine 106 are each glycosylated (N-linked (GlcNAc...) asparagine).

Belongs to the type II (or gamma) interferon family. As to quaternary structure, homodimer. Interacts with IFNGR1 (via extracellular domain); this interaction promotes IFNGR1 dimerization. In terms of tissue distribution, released primarily from activated T lymphocytes.

The protein resides in the secreted. Type II interferon produced by immune cells such as T-cells and NK cells that plays crucial roles in antimicrobial, antiviral, and antitumor responses by activating effector immune cells and enhancing antigen presentation. Primarily signals through the JAK-STAT pathway after interaction with its receptor IFNGR1 to affect gene regulation. Upon IFNG binding, IFNGR1 intracellular domain opens out to allow association of downstream signaling components JAK2, JAK1 and STAT1, leading to STAT1 activation, nuclear translocation and transcription of IFNG-regulated genes. Many of the induced genes are transcription factors such as IRF1 that are able to further drive regulation of a next wave of transcription. Plays a role in class I antigen presentation pathway by inducing a replacement of catalytic proteasome subunits with immunoproteasome subunits. In turn, increases the quantity, quality, and repertoire of peptides for class I MHC loading. Increases the efficiency of peptide generation also by inducing the expression of activator PA28 that associates with the proteasome and alters its proteolytic cleavage preference. Up-regulates as well MHC II complexes on the cell surface by promoting expression of several key molecules such as cathepsins B/CTSB, H/CTSH, and L/CTSL. Participates in the regulation of hematopoietic stem cells during development and under homeostatic conditions by affecting their development, quiescence, and differentiation. This is Interferon gamma (IFNG) from Ovis aries (Sheep).